Consider the following 240-residue polypeptide: Large ribosomal subunit protein uL2 (240 aa).

A compositionally biased stretch (polar residues) spans 1–11 (MGKRLISQNRG). Disordered stretches follow at residues 1 to 28 (MGKR…KGAV) and 206 to 240 (GGGR…TGRK). Basic residues-rich tracts occupy residues 13-28 (GTPK…KGAV) and 224-240 (SPGR…TGRK).

It belongs to the universal ribosomal protein uL2 family. In terms of assembly, part of the 50S ribosomal subunit. Forms a bridge to the 30S subunit in the 70S ribosome.

In terms of biological role, one of the primary rRNA binding proteins. Required for association of the 30S and 50S subunits to form the 70S ribosome, for tRNA binding and peptide bond formation. It has been suggested to have peptidyltransferase activity; this is somewhat controversial. Makes several contacts with the 16S rRNA in the 70S ribosome. This is Large ribosomal subunit protein uL2 from Methanococcus maripaludis (strain C7 / ATCC BAA-1331).